Consider the following 510-residue polypeptide: ATP synthase subunit alpha (510 aa).

Position 169–176 (169–176) interacts with ATP; sequence GDRQTGKT.

The protein belongs to the ATPase alpha/beta chains family. In terms of assembly, F-type ATPases have 2 components, CF(1) - the catalytic core - and CF(0) - the membrane proton channel. CF(1) has five subunits: alpha(3), beta(3), gamma(1), delta(1), epsilon(1). CF(0) has four main subunits: a(1), b(1), b'(1) and c(9-12).

Its subcellular location is the cell inner membrane. It carries out the reaction ATP + H2O + 4 H(+)(in) = ADP + phosphate + 5 H(+)(out). In terms of biological role, produces ATP from ADP in the presence of a proton gradient across the membrane. The alpha chain is a regulatory subunit. This Rhodopseudomonas palustris (strain BisA53) protein is ATP synthase subunit alpha.